Consider the following 211-residue polypeptide: MAAEQKKVAKKPRAKPAHPSSSEMVLAAITALKERGGSSAQAIRKYIEKNYTVDIKKQAIFIKRALITGVEKGTLVQVKGKGASGSFKLGKKKEGKSDAQKAPDAAKKAKLAAKKKEAKEKKAARSKAKKEKLAAKKASKKTTKKVKKPAAKKAKKPAAKKAAKKPAAKKPAAKKAAAKPAPAKKAAKKPAAKKAAKKVAKKPAAKKAAKK.

Disordered regions lie at residues 1–22 and 81–211; these read MAAEQKKVAKKPRAKPAHPSSS and KGAS…AAKK. The 75-residue stretch at 17-91 folds into the H15 domain; the sequence is AHPSSSEMVL…GASGSFKLGK (75 aa). 2 stretches are compositionally biased toward basic and acidic residues: residues 95–107 and 114–123; these read GKSDAQKAPDAAK and KKKEAKEKKA. 2 stretches are compositionally biased toward basic residues: residues 124–177 and 185–211; these read ARSK…KKAA and KAAKKPAAKKAAKKVAKKPAAKKAAKK.

It belongs to the histone H1/H5 family.

The protein resides in the nucleus. It localises to the chromosome. Its function is as follows. Histones H1 are necessary for the condensation of nucleosome chains into higher-order structures. This chain is Histone H1-beta, late embryonic, found in Strongylocentrotus purpuratus (Purple sea urchin).